The chain runs to 65 residues: Large ribosomal subunit protein uL30 (65 aa).

This sequence belongs to the universal ribosomal protein uL30 family. In terms of assembly, part of the 50S ribosomal subunit.

This Chloroflexus aurantiacus (strain ATCC 29366 / DSM 635 / J-10-fl) protein is Large ribosomal subunit protein uL30.